The chain runs to 812 residues: INO80 complex subunit D (812 aa).

2 disordered regions span residues 521–573 and 581–600; these read NSRK…LCMP and EVSSIRSPSTPNLSTEELPD. Basic residues predominate over residues 524–558; the sequence is KVQHHQQRKPRKKTKPPALTKKTKKKRRRGPRRPQ. A compositionally biased stretch (polar residues) spans 585–595; sequence IRSPSTPNLST.

Belongs to the INO80D family. As to quaternary structure, component of the chromatin-remodeling INO80 complex.

The protein localises to the nucleus. Functionally, putative regulatory component of the chromatin remodeling INO80 complex which is involved in transcriptional regulation, DNA replication and probably DNA repair. The chain is INO80 complex subunit D from Xenopus laevis (African clawed frog).